A 657-amino-acid polypeptide reads, in one-letter code: Histidine ammonia-lyase (657 aa).

The 5-imidazolinone (Ala-Gly) cross-link spans 253-255 (ASG). Ser254 carries the post-translational modification 2,3-didehydroalanine (Ser). Thr396 carries the post-translational modification Phosphothreonine. Ser635 is modified (phosphoserine). Thr637 bears the Phosphothreonine mark. A Phosphoserine modification is found at Ser648.

The protein belongs to the PAL/histidase family. Contains an active site 4-methylidene-imidazol-5-one (MIO), which is formed autocatalytically by cyclization and dehydration of residues Ala-Ser-Gly.

The enzyme catalyses L-histidine = trans-urocanate + NH4(+). The protein operates within amino-acid degradation; L-histidine degradation into L-glutamate; N-formimidoyl-L-glutamate from L-histidine: step 1/3. The protein is Histidine ammonia-lyase (HAL) of Homo sapiens (Human).